We begin with the raw amino-acid sequence, 345 residues long: UDP-N-acetylenolpyruvoylglucosamine reductase (345 aa).

The FAD-binding PCMH-type domain occupies 25–193 (LPAHCTDFVS…VGVTFLLPKA (169 aa)). The active site involves arginine 169. Serine 237 serves as the catalytic Proton donor. The active site involves glutamate 333.

This sequence belongs to the MurB family. Requires FAD as cofactor.

Its subcellular location is the cytoplasm. The catalysed reaction is UDP-N-acetyl-alpha-D-muramate + NADP(+) = UDP-N-acetyl-3-O-(1-carboxyvinyl)-alpha-D-glucosamine + NADPH + H(+). The protein operates within cell wall biogenesis; peptidoglycan biosynthesis. Functionally, cell wall formation. In Pseudoalteromonas atlantica (strain T6c / ATCC BAA-1087), this protein is UDP-N-acetylenolpyruvoylglucosamine reductase.